Reading from the N-terminus, the 1746-residue chain is Inactive tyrosine-protein kinase PEAK1 (1746 aa).

The interval 44 to 66 is disordered; sequence KTNANHSNNHRIRNTGNFRPPVA. Phosphoserine is present on Ser281. Disordered regions lie at residues 334 to 411 and 489 to 517; these read QSMV…KVPE and LEGPVNSPKTKSSSSTPNSPVTSSSLTPG. Residues 338–349 show a composition bias toward low complexity; sequence SSDSTSPDSSLT. Residues 355–364 are compositionally biased toward polar residues; sequence ETASSLSQKI. Residues 492–513 are compositionally biased toward low complexity; sequence PVNSPKTKSSSSTPNSPVTSSS. Ser540, Ser572, and Ser587 each carry phosphoserine. Positions 551-577 are disordered; the sequence is ITSGTGPNVPPRKNCHKSAPTSPTATN. Residues Tyr635 and Tyr641 each carry the phosphotyrosine modification. Residue Ser648 is modified to Phosphoserine. Tyr665 bears the Phosphotyrosine mark. Disordered stretches follow at residues 671 to 700, 713 to 764, 802 to 920, 1052 to 1102, and 1138 to 1158; these read ESKVPDNTTSKTTDCLQTKGFSNSTEHKRG, LNRG…EKAS, DADV…AADA, VTED…DPNP, and GKTDQEAPNASQPTPPPLPKK. Residues 675-694 are compositionally biased toward polar residues; it reads PDNTTSKTTDCLQTKGFSNS. The span at 718 to 730 shows a compositional bias: low complexity; that stretch reads SSPQRSYSSSHSS. Polar residues-rich tracts occupy residues 748-758 and 820-841; these read TQESQMVGSSS and LFTSQPSGEAEAPQTTDSPTTK. Ser826 and Ser854 each carry phosphoserine. Over residues 864 to 874 the composition is skewed to pro residues; sequence SEPPAPFPPPR. A compositionally biased stretch (polar residues) spans 889-902; that stretch reads HFTNWTKPTSPTRS. Phosphoserine is present on Ser898. Basic and acidic residues-rich tracts occupy residues 903–920, 1052–1062, and 1084–1094; these read TEAESVLHSEGSRRAADA, VTEDFSPRDPR, and ELEREDGKEDI. Thr1151 bears the Phosphothreonine mark. A Phosphotyrosine modification is found at Tyr1188. The required for homodimerization stretch occupies residues 1285 to 1311; sequence EVVGKIRSLHTDALKKLAVKCEDLFMA. In terms of domain architecture, Protein kinase spans 1313–1675; the sequence is QKDQLRFGVD…LLWGPREDLF (363 aa). Ser1374 is modified (phosphoserine). The segment at 1402–1456 is disordered; that stretch reads LLPWEDPDDPEKDEDDMEETEEDAKGETDGKNPKPCSEAASSQKENQGVMSKKQR. Residues 1406-1423 show a composition bias toward acidic residues; that stretch reads EDPDDPEKDEDDMEETEE. Basic and acidic residues predominate over residues 1424–1433; that stretch reads DAKGETDGKN. The span at 1440 to 1450 shows a compositional bias: polar residues; that stretch reads AASSQKENQGV. Positions 1670-1743 are required for homodimerization; it reads PREDLFQTFT…DSLSCIVKIL (74 aa).

It belongs to the protein kinase superfamily. Homodimer. Interacts with BCAR1 and CRK. Interacts with PRAG1. Interacts (when phosphorylated at Tyr-1188) with SHC1 (via PID domain). Found in a complex with PPP1CA, PPP1CC, SHC1 and PEAK1. Interacts (when phosphorylated at Tyr-635) with tensin TNS3 (when phosphorylated on the SH2 domain); TNS3 also interacts with integrins ITGB1, ITGB3 and ITGB5 and mediates their association with PEAK1. Interacts with RASAL2 and GRB2. Phosphorylated on tyrosine in a CSK-dependent manner in response to adhesion to fibronectin and to EGF stimulation. Phosphorylation at Tyr-665 by a Src family kinase controls subcellular localization to focal adhesion and focal adhesion dynamics. Phosphorylation at Tyr-1188 is essential for binding to SHC1. Phosphorylation at Tyr-635 promotes interaction with tensin TNS3.

It localises to the cytoplasm. It is found in the cytoskeleton. Its subcellular location is the cell junction. The protein resides in the focal adhesion. Its function is as follows. Probable catalytically inactive kinase. Scaffolding protein that regulates the cytoskeleton to control cell spreading and migration by modulating focal adhesion dynamics. Acts as a scaffold for mediating EGFR signaling. The protein is Inactive tyrosine-protein kinase PEAK1 (PEAK1) of Homo sapiens (Human).